We begin with the raw amino-acid sequence, 143 residues long: Large ribosomal subunit protein bL17 (143 aa).

The protein belongs to the bacterial ribosomal protein bL17 family. As to quaternary structure, part of the 50S ribosomal subunit. Contacts protein L32.

This chain is Large ribosomal subunit protein bL17, found in Chelativorans sp. (strain BNC1).